A 110-amino-acid polypeptide reads, in one-letter code: Protein OPG154 (110 aa).

It belongs to the orthopoxvirus OPG154 protein family. In terms of assembly, homohexamers, covalently linked. Interacts with OPG144 and OPG153.

The protein localises to the virion. Structural protein involved in the envelopment of mature virion (MV) to form the wrapped virion (WV). The wrapping consists of the addition of Golgi membranes to the mature virion. Participates in mature virion (MV) movement within the infected cell. May play an indirect role in MV-cell fusion. The chain is Protein OPG154 (OPG154) from Homo sapiens (Human).